A 348-amino-acid chain; its full sequence is Anthranilate phosphoribosyltransferase (348 aa).

5-phospho-alpha-D-ribose 1-diphosphate-binding positions include Gly-87, 90-91, Thr-95, 97-100, 115-123, and Ser-127; these read GD, NIST, and KHGNRSASG. Gly-87 lines the anthranilate pocket. Ser-99 contributes to the Mg(2+) binding site. Asn-118 lines the anthranilate pocket. Arg-173 lines the anthranilate pocket. Positions 232 and 233 each coordinate Mg(2+).

It belongs to the anthranilate phosphoribosyltransferase family. Homodimer. Mg(2+) serves as cofactor.

It catalyses the reaction N-(5-phospho-beta-D-ribosyl)anthranilate + diphosphate = 5-phospho-alpha-D-ribose 1-diphosphate + anthranilate. It functions in the pathway amino-acid biosynthesis; L-tryptophan biosynthesis; L-tryptophan from chorismate: step 2/5. Catalyzes the transfer of the phosphoribosyl group of 5-phosphorylribose-1-pyrophosphate (PRPP) to anthranilate to yield N-(5'-phosphoribosyl)-anthranilate (PRA). The polypeptide is Anthranilate phosphoribosyltransferase (Synechococcus sp. (strain CC9311)).